The chain runs to 616 residues: Dihydroxy-acid dehydratase (616 aa).

A Mg(2+)-binding site is contributed by Asp81. Position 122 (Cys122) interacts with [2Fe-2S] cluster. The Mg(2+) site is built by Asp123 and Lys124. Lys124 is modified (N6-carboxylysine). Cys195 contributes to the [2Fe-2S] cluster binding site. Glu491 serves as a coordination point for Mg(2+). The Proton acceptor role is filled by Ser517.

This sequence belongs to the IlvD/Edd family. In terms of assembly, homodimer. [2Fe-2S] cluster serves as cofactor. It depends on Mg(2+) as a cofactor.

The enzyme catalyses (2R)-2,3-dihydroxy-3-methylbutanoate = 3-methyl-2-oxobutanoate + H2O. It carries out the reaction (2R,3R)-2,3-dihydroxy-3-methylpentanoate = (S)-3-methyl-2-oxopentanoate + H2O. It participates in amino-acid biosynthesis; L-isoleucine biosynthesis; L-isoleucine from 2-oxobutanoate: step 3/4. Its pathway is amino-acid biosynthesis; L-valine biosynthesis; L-valine from pyruvate: step 3/4. Its function is as follows. Functions in the biosynthesis of branched-chain amino acids. Catalyzes the dehydration of (2R,3R)-2,3-dihydroxy-3-methylpentanoate (2,3-dihydroxy-3-methylvalerate) into 2-oxo-3-methylpentanoate (2-oxo-3-methylvalerate) and of (2R)-2,3-dihydroxy-3-methylbutanoate (2,3-dihydroxyisovalerate) into 2-oxo-3-methylbutanoate (2-oxoisovalerate), the penultimate precursor to L-isoleucine and L-valine, respectively. The sequence is that of Dihydroxy-acid dehydratase from Methylobacillus flagellatus (strain ATCC 51484 / DSM 6875 / VKM B-1610 / KT).